The chain runs to 390 residues: Magnesium-protoporphyrin IX monomethyl ester [oxidative] cyclase (390 aa).

The interval 1 to 20 (MSQSTIESTNKKEINKGKAP) is disordered.

This sequence belongs to the AcsF family. Fe cation is required as a cofactor.

It carries out the reaction Mg-protoporphyrin IX 13-monomethyl ester + 3 NADPH + 3 O2 + 2 H(+) = 3,8-divinyl protochlorophyllide a + 3 NADP(+) + 5 H2O. It functions in the pathway porphyrin-containing compound metabolism; chlorophyll biosynthesis (light-independent). Functionally, catalyzes the formation of the isocyclic ring in chlorophyll biosynthesis. Mediates the cyclase reaction, which results in the formation of divinylprotochlorophyllide (Pchlide) characteristic of all chlorophylls from magnesium-protoporphyrin IX 13-monomethyl ester (MgPMME). The protein is Magnesium-protoporphyrin IX monomethyl ester [oxidative] cyclase of Prochlorococcus marinus (strain MIT 9301).